The chain runs to 437 residues: Nuclear hormone receptor family member nhr-100 (437 aa).

A DNA-binding region (nuclear receptor) is located at residues 21-96; sequence DTSCLVCGDP…VGMDANAVRS (76 aa). 2 NR C4-type zinc fingers span residues 24–44 and 60–79; these read CLVCGDPHGKRHYGAMSCNGC and CSFNNECIIEFKYRNRCRAC. The NR LBD domain maps to 141 to 409; that stretch reads QTKEIIAHML…SGGGLPYDIH (269 aa).

Belongs to the nuclear hormone receptor family.

It localises to the nucleus. Functionally, orphan nuclear receptor. This chain is Nuclear hormone receptor family member nhr-100 (nhr-100), found in Caenorhabditis elegans.